A 173-amino-acid chain; its full sequence is ATP synthase subunit b (173 aa).

The helical transmembrane segment at L15–A35 threads the bilayer.

This sequence belongs to the ATPase B chain family. As to quaternary structure, F-type ATPases have 2 components, F(1) - the catalytic core - and F(0) - the membrane proton channel. F(1) has five subunits: alpha(3), beta(3), gamma(1), delta(1), epsilon(1). F(0) has three main subunits: a(1), b(2) and c(10-14). The alpha and beta chains form an alternating ring which encloses part of the gamma chain. F(1) is attached to F(0) by a central stalk formed by the gamma and epsilon chains, while a peripheral stalk is formed by the delta and b chains.

Its subcellular location is the cell membrane. Its function is as follows. F(1)F(0) ATP synthase produces ATP from ADP in the presence of a proton or sodium gradient. F-type ATPases consist of two structural domains, F(1) containing the extramembraneous catalytic core and F(0) containing the membrane proton channel, linked together by a central stalk and a peripheral stalk. During catalysis, ATP synthesis in the catalytic domain of F(1) is coupled via a rotary mechanism of the central stalk subunits to proton translocation. In terms of biological role, component of the F(0) channel, it forms part of the peripheral stalk, linking F(1) to F(0). This is ATP synthase subunit b from Pediococcus pentosaceus (strain ATCC 25745 / CCUG 21536 / LMG 10740 / 183-1w).